The following is a 229-amino-acid chain: MHEAFTIEQLPPSWQEQLKDEWSQPYWSQLLAFLKSEYAQATIYPKKENVFAALQSTPFDQVRVVILGQDPYHGEGQAHGLSFSVPRGQALPPSLRNIFQELHTDLGIRNESGCLQAWADQGVLLLNTVLTVRAGEAFSHAGRGWERFTDAIVTKLIQNRTHVIFVLWGNAARQKCNLLFQTKHQHAVLACPHPSPLAAHRGFFGCCHFSKINYLLKKQGKTMINWKIE.

The active-site Proton acceptor is aspartate 70.

It belongs to the uracil-DNA glycosylase (UDG) superfamily. UNG family.

The protein localises to the cytoplasm. The catalysed reaction is Hydrolyzes single-stranded DNA or mismatched double-stranded DNA and polynucleotides, releasing free uracil.. Excises uracil residues from the DNA which can arise as a result of misincorporation of dUMP residues by DNA polymerase or due to deamination of cytosine. In Chlamydia trachomatis serovar A (strain ATCC VR-571B / DSM 19440 / HAR-13), this protein is Uracil-DNA glycosylase.